A 358-amino-acid polypeptide reads, in one-letter code: DNA polymerase IV (358 aa).

The region spanning 4-185 is the UmuC domain; that stretch reads IIHIDMDCYF…LSLRKIPGVG (182 aa). The Mg(2+) site is built by Asp8 and Asp103. Glu104 is a catalytic residue.

It belongs to the DNA polymerase type-Y family. In terms of assembly, monomer. It depends on Mg(2+) as a cofactor.

The protein localises to the cytoplasm. The enzyme catalyses DNA(n) + a 2'-deoxyribonucleoside 5'-triphosphate = DNA(n+1) + diphosphate. Its function is as follows. Poorly processive, error-prone DNA polymerase involved in untargeted mutagenesis. Copies undamaged DNA at stalled replication forks, which arise in vivo from mismatched or misaligned primer ends. These misaligned primers can be extended by PolIV. Exhibits no 3'-5' exonuclease (proofreading) activity. May be involved in translesional synthesis, in conjunction with the beta clamp from PolIII. This is DNA polymerase IV from Shewanella baltica (strain OS195).